Reading from the N-terminus, the 386-residue chain is Innexin inx4 (386 aa).

Residues 1–21 (MLEFVRPLQSILQIKQVNSTD) are Cytoplasmic-facing. Residues 22-42 (LVWRLHCRVTVFLLLLASLLL) form a helical membrane-spanning segment. Residues 43 to 111 (SARQYFGNPI…ESERSYQKYY (69 aa)) are Extracellular-facing. Residues 112–132 (QWVVFILALQACMFSVPNFLW) form a helical membrane-spanning segment. Over 133–187 (KAWEAGRLQSLCDGLTTPIVPDHWEKTRKKQLITYLSADFPRLHRTYLLRYCFCT) the chain is Cytoplasmic. The helical transmembrane segment at 188–208 (LLNFCNVLLNIFLVNVIFSGF) threads the bilayer. At 209-272 (WSNYHPAVKA…LNVVNEKIFA (64 aa)) the chain is on the extracellular side. A helical transmembrane segment spans residues 273-293 (FIWLWFLGLLVISMLNLLFWI). Residues 294–386 (VVLCSKGFRL…DPEGYDEEGV (93 aa)) are Cytoplasmic-facing. The interval 358–386 (HNGHKTFRMPKGGEPDFYTDPEGYDEEGV) is disordered. Positions 374–386 (FYTDPEGYDEEGV) are enriched in acidic residues.

It belongs to the pannexin family.

It is found in the cell membrane. It localises to the cell junction. Its subcellular location is the gap junction. Functionally, structural component of gap junctions. Required for normal development of ovary. Required for normal egg production after blood meal. Required for normal development of testis. (Microbial infection) Modulates the development of Plasmodium falciparum oocysts. The sequence is that of Innexin inx4 from Anopheles gambiae (African malaria mosquito).